Consider the following 274-residue polypeptide: Proteasome subunit beta (274 aa).

Positions 1 to 52 are cleaved as a propeptide — removed in mature form; by autocatalysis; sequence MADPLGAAGRLPAVFMTPGTSSFADFLSRSAPHLLPGARSGLPGPVTEVAHG. T53 (nucleophile) is an active-site residue.

It belongs to the peptidase T1B family. In terms of assembly, the 20S proteasome core is composed of 14 alpha and 14 beta subunits that assemble into four stacked heptameric rings, resulting in a barrel-shaped structure. The two inner rings, each composed of seven catalytic beta subunits, are sandwiched by two outer rings, each composed of seven alpha subunits. The catalytic chamber with the active sites is on the inside of the barrel. Has a gated structure, the ends of the cylinder being occluded by the N-termini of the alpha-subunits. Is capped by the proteasome-associated ATPase, ARC.

It localises to the cytoplasm. The enzyme catalyses Cleavage of peptide bonds with very broad specificity.. The protein operates within protein degradation; proteasomal Pup-dependent pathway. With respect to regulation, the formation of the proteasomal ATPase ARC-20S proteasome complex, likely via the docking of the C-termini of ARC into the intersubunit pockets in the alpha-rings, may trigger opening of the gate for substrate entry. Interconversion between the open-gate and close-gate conformations leads to a dynamic regulation of the 20S proteasome proteolysis activity. Functionally, component of the proteasome core, a large protease complex with broad specificity involved in protein degradation. The protein is Proteasome subunit beta of Frankia casuarinae (strain DSM 45818 / CECT 9043 / HFP020203 / CcI3).